A 368-amino-acid chain; its full sequence is Cytochrome b (368 aa).

The next 4 helical transmembrane spans lie at 25–45 (FGSM…FLAM), 69–90 (WIMQ…YIHI), 105–125 (WLSG…GYVL), and 170–190 (FFAL…IHII). Heme b-binding residues include His75 and His89. Heme b-binding residues include His174 and His188. Position 193 (His193) interacts with a ubiquinone. A run of 4 helical transmembrane segments spans residues 218–238 (YKDM…MSFT), 280–300 (LGGT…PFTH), 312–332 (LTQT…WTAT), and 339–358 (FIFI…IINP).

Belongs to the cytochrome b family. As to quaternary structure, the cytochrome bc1 complex contains 3 respiratory subunits (MT-CYB, CYC1 and UQCRFS1), 2 core proteins (UQCRC1 and UQCRC2) and probably 6 low-molecular weight proteins. Heme b is required as a cofactor.

The protein resides in the mitochondrion inner membrane. Its function is as follows. Component of the ubiquinol-cytochrome c reductase complex (complex III or cytochrome b-c1 complex) that is part of the mitochondrial respiratory chain. The b-c1 complex mediates electron transfer from ubiquinol to cytochrome c. Contributes to the generation of a proton gradient across the mitochondrial membrane that is then used for ATP synthesis. This Notechis ater (Black tiger snake) protein is Cytochrome b (MT-CYB).